The primary structure comprises 366 residues: Flagellar P-ring protein (366 aa).

The N-terminal stretch at methionine 1–alanine 20 is a signal peptide.

It belongs to the FlgI family. The basal body constitutes a major portion of the flagellar organelle and consists of four rings (L,P,S, and M) mounted on a central rod.

The protein resides in the periplasm. It is found in the bacterial flagellum basal body. Its function is as follows. Assembles around the rod to form the L-ring and probably protects the motor/basal body from shearing forces during rotation. In Escherichia coli (strain SE11), this protein is Flagellar P-ring protein.